The following is a 266-amino-acid chain: MTKRTIEQILDELRRGRRPLLADKPAESDASRYDCLRCKDQGGYLVRQNGLEVWTMCSCMAERKVKRLLGASEITHAFRQLGFKEFRTEGKPQAIKDAFECTKEYVADYEQIKDCRKNSIALLGQPGSGKTHLLTAAANELMRTCYVPVIYFPFVEGFTDLKNDFALLEAKLNRMKQADVLFIDDLFKPVNGKPRATDWQLEQMYSVLNYRYLNHKPILLSSELTIEGLVRVDEALGTRIYEMCSDYLVIIKGAAYELNHRLEGVR.

124–131 is a binding site for ATP; the sequence is GQPGSGKT.

The protein to B.subtilis YqaM.

Its function is as follows. May function as a transcriptional antiterminator. The polypeptide is Phage-like element PBSX protein XkdC (xkdC) (Bacillus subtilis (strain 168)).